Reading from the N-terminus, the 273-residue chain is NAD(P)H-hydrate epimerase (273 aa).

Residues Ala-18–Glu-257 enclose the YjeF N-terminal domain. Asn-71–Asp-75 is a binding site for (6S)-NADPHX. The K(+) site is built by Asn-72 and Asp-146. Residues Gly-150 to Pro-157, Tyr-162, and Asp-188 each bind (6S)-NADPHX. Ser-191 serves as a coordination point for K(+).

Belongs to the NnrE/AIBP family. Requires K(+) as cofactor.

The catalysed reaction is (6R)-NADHX = (6S)-NADHX. It catalyses the reaction (6R)-NADPHX = (6S)-NADPHX. Functionally, catalyzes the epimerization of the S- and R-forms of NAD(P)HX, a damaged form of NAD(P)H that is a result of enzymatic or heat-dependent hydration. This is a prerequisite for the S-specific NAD(P)H-hydrate dehydratase to allow the repair of both epimers of NAD(P)HX. This chain is NAD(P)H-hydrate epimerase, found in Giardia intestinalis (strain ATCC 50803 / WB clone C6) (Giardia lamblia).